The primary structure comprises 1447 residues: Inositol 1,4,5-triphosphate receptor associated 2 (1447 aa).

Over 1-1388 (MDVGVTPRRH…RPAVSRGARG (1388 aa)) the chain is Cytoplasmic. Disordered regions lie at residues 64 to 96 (VRPD…PRAP) and 420 to 439 (LSLT…RKQM). Residues 71–92 (SASSAGMLTPTASPGPGSSCNT) show a composition bias toward polar residues. 2 coiled-coil regions span residues 354–518 (FCVA…EYSS) and 665–731 (TDWI…DNRE). The segment covering 420 to 436 (LSLTSSEESRAQAAAQR) has biased composition (low complexity). Disordered stretches follow at residues 790–828 (KQEE…EEPQ), 841–860 (KKSE…GEQR), 991–1132 (PVAE…SPSD), 1267–1289 (NERS…TTSN), and 1355–1379 (DEPT…MEGR). The segment covering 800–812 (VSDKEKITAKSEG) has biased composition (basic and acidic residues). The span at 1021–1035 (KKTVVTSDSNSTGSA) shows a compositional bias: polar residues. Composition is skewed to basic and acidic residues over residues 1037–1049 (SLKD…KDMT) and 1080–1096 (KKEM…KAQE). The tract at residues 1076–1265 (RNKLKKEMSS…ELLELRENLT (190 aa)) is necessary for spindle and spindle pole localization. A compositionally biased stretch (polar residues) spans 1110–1119 (TSVSSENASD). A compositionally biased stretch (basic and acidic residues) spans 1120 to 1132 (STKDDKNSLSPSD). Polar residues predominate over residues 1359–1371 (LMNSPTPSPTDNA). Residues 1388-1447 (GIWIWVALFVVLAVLLALLASLMLQPAVDAAPVGTGDSWMTIQQLLWPYTGLRHNGQPPV) are necessary for nuclear membrane localization. A helical; Anchor for type IV membrane protein transmembrane segment spans residues 1389-1409 (IWIWVALFVVLAVLLALLASL). Over 1410–1447 (MLQPAVDAAPVGTGDSWMTIQQLLWPYTGLRHNGQPPV) the chain is Lumenal.

Belongs to the IRAG2 family.

The protein resides in the endoplasmic reticulum membrane. It is found in the nucleus envelope. Its subcellular location is the cytoplasm. The protein localises to the cytoskeleton. It localises to the microtubule organizing center. The protein resides in the centrosome. It is found in the spindle pole. Its subcellular location is the chromosome. Functionally, a maternally expressed membrane and cytoskeletal linker protein, which is essential for attachment of the centrosome to the male pronucleus. Promotes male and female pronucleus congression and subsequent fusion after fertilization. Congression is mediated by the sperm aster microtubules. The chain is Inositol 1,4,5-triphosphate receptor associated 2 (irag2) from Danio rerio (Zebrafish).